The sequence spans 315 residues: Probable cell division protein WhiA (315 aa).

A DNA-binding region (H-T-H motif) is located at residues threonine 275 to arginine 309.

The protein belongs to the WhiA family.

Functionally, involved in cell division and chromosome segregation. This Lysinibacillus sphaericus (strain C3-41) protein is Probable cell division protein WhiA.